Consider the following 86-residue polypeptide: U15-lycotoxin-Ls1d (86 aa).

A signal peptide spans 1-20 (MNSKIFAVLFLLAFLSCVLS). The WAP domain maps to 21-66 (DQYCPKSSITACKKMNIRNDCCKDDDCTGGSWCCATPCGNFCKYPT). 5 disulfide bridges follow: cysteine 24–cysteine 54, cysteine 32–cysteine 58, cysteine 41–cysteine 53, cysteine 42–cysteine 80, and cysteine 47–cysteine 62.

This sequence belongs to the venom protein 11 family. 01 (wap-1) subfamily. Contains 5 disulfide bonds. Expressed by the venom gland.

It is found in the secreted. Has antibacterial activity. The polypeptide is U15-lycotoxin-Ls1d (Lycosa singoriensis (Wolf spider)).